The chain runs to 471 residues: Putative multidrug resistance protein MdtD (471 aa).

At 1 to 11 (MTDLPDSTRWQ) the chain is on the periplasmic side. The helical transmembrane segment at 12–32 (LWIVAFGFFMQSLDTTIVNTA) threads the bilayer. The Cytoplasmic portion of the chain corresponds to 33-48 (LPSMAQSLGESPLHMH). Residues 49–69 (MVIVSYVLTVAVMLPASGWLA) traverse the membrane as a helical segment. Topologically, residues 70-76 (DKVGVRN) are periplasmic. Residues 77–97 (IFFTAIVLFTLGSLFCALSGT) form a helical membrane-spanning segment. Residues 98–101 (LNEL) are Cytoplasmic-facing. Residues 102-124 (LLARALQGVGGAMMVPVGRLTVM) form a helical membrane-spanning segment. At 125-137 (KIVPREQYMAAMT) the chain is on the periplasmic side. The helical transmembrane segment at 138 to 158 (FVTLPGQIGPLLGPALGGLLV) threads the bilayer. Residues 159–164 (EYASWH) lie on the Cytoplasmic side of the membrane. The chain crosses the membrane as a helical span at residues 165 to 185 (WIFLINIPVGIIGAITTLMLM). The Periplasmic portion of the chain corresponds to 186–196 (PNYTMQTRRFD). The helical transmembrane segment at 197 to 217 (LSGFLLLAVGMAVLTLALDGS) threads the bilayer. The Cytoplasmic segment spans residues 218–224 (KGTGFSP). A helical transmembrane segment spans residues 225-245 (LAIAGLVAVGVVALVLYLLHA). Over 246–262 (QNNNRALFSLKLFRTRT) the chain is Periplasmic. The helical transmembrane segment at 263 to 283 (FSLGLAGSFAGRIGSGMLPFM) threads the bilayer. Topologically, residues 284 to 285 (TP) are cytoplasmic. Residues 286–306 (VFLQIGFGFSPFHAGLMMIPM) form a helical membrane-spanning segment. At 307 to 341 (VLGSMGMKRIVVQVVNRFGYRRVLVATTLGLSLVT) the chain is on the periplasmic side. A helical membrane pass occupies residues 342 to 362 (LLFMTTALLGWYYVLPFVLFL). The Cytoplasmic segment spans residues 363–395 (QGMVNSTRFSSMNTLTLKDLPDNLASSGNSLLS). The chain crosses the membrane as a helical span at residues 396–416 (MIMQLSMSIGVTIAGLLLGLF). Residues 417-430 (GSQHVSVDSGTTQT) lie on the Periplasmic side of the membrane. Residues 431-451 (VFMYTWLSMASIIALPAFIFA) form a helical membrane-spanning segment. The Cytoplasmic portion of the chain corresponds to 452 to 471 (RVPNDTHQNVAISRRKRSAQ).

Belongs to the major facilitator superfamily. TCR/Tet family.

Its subcellular location is the cell inner membrane. This is Putative multidrug resistance protein MdtD from Escherichia coli O6:H1 (strain CFT073 / ATCC 700928 / UPEC).